Here is a 120-residue protein sequence, read N- to C-terminus: MSRAKVTNARRKQRVRLSLRRSAGGRPRLSVFRSSKHIYAQVIDDQKGETLASASSMEKEMRSSGNTGADIDAAKAVGKLLAERAVKAGIKEVVFDRGGYLYHGRVKALADAARESGLSF.

It belongs to the universal ribosomal protein uL18 family. As to quaternary structure, part of the 50S ribosomal subunit; part of the 5S rRNA/L5/L18/L25 subcomplex. Contacts the 5S and 23S rRNAs.

This is one of the proteins that bind and probably mediate the attachment of the 5S RNA into the large ribosomal subunit, where it forms part of the central protuberance. This chain is Large ribosomal subunit protein uL18, found in Bradyrhizobium sp. (strain BTAi1 / ATCC BAA-1182).